An 83-amino-acid chain; its full sequence is Small ribosomal subunit protein eS21 (83 aa).

It belongs to the eukaryotic ribosomal protein eS21 family. In terms of assembly, component of the 40S small ribosomal subunit. Interacts with sta.

The protein resides in the cytoplasm. It localises to the cytosol. The protein localises to the rough endoplasmic reticulum. Functionally, may be an associated component of the ribosome rather than a core structural subunit. May act as a translation initiation factor. Has a role in regulation of cell proliferation in the hematopoietic organs and the imaginal disks of larva. The polypeptide is Small ribosomal subunit protein eS21 (RpS21) (Drosophila simulans (Fruit fly)).